Here is a 138-residue protein sequence, read N- to C-terminus: Basic phospholipase A2 vaspin B chain (138 aa).

The first 16 residues, 1–16, serve as a signal peptide directing secretion; the sequence is MRILWIVAVCLIGVEG. Intrachain disulfides connect Cys-42–Cys-131, Cys-44–Cys-60, Cys-59–Cys-111, Cys-65–Cys-138, Cys-66–Cys-104, Cys-73–Cys-97, and Cys-91–Cys-102. Ca(2+)-binding residues include Tyr-43, Gly-45, and Gly-47. His-63 is a catalytic residue. Asp-64 serves as a coordination point for Ca(2+). The active site involves Asp-105.

The protein belongs to the phospholipase A2 family. Group II subfamily. D49 sub-subfamily. Heterodimer of a weakly toxic basic protein having phospholipase A2 activity (B chain (AC Q8JFG1)) and a non-toxic acidic protein functioning as its inhibitor (A chain). Requires Ca(2+) as cofactor. As to expression, expressed by the venom gland.

It is found in the secreted. It carries out the reaction a 1,2-diacyl-sn-glycero-3-phosphocholine + H2O = a 1-acyl-sn-glycero-3-phosphocholine + a fatty acid + H(+). Functionally, heterodimer: postsynaptic neurotoxin. Its function is as follows. Monomer: snake venom phospholipase A2 (PLA2) that shows postsynaptic neurotoxicity. PLA2 catalyzes the calcium-dependent hydrolysis of the 2-acyl groups in 3-sn-phosphoglycerides. The polypeptide is Basic phospholipase A2 vaspin B chain (Vipera aspis aspis (Aspic viper)).